A 78-amino-acid polypeptide reads, in one-letter code: MEGNITDGLKYVGAGLATLGMIGSALGVGNIFASFLDAAMRNPSAAPQQTGNLFIGMALAEALGIFSVLIAILILFVA.

2 helical membrane passes run 16–36 and 57–77; these read LATL…ASFL and MALA…ILFV.

It belongs to the ATPase C chain family. F-type ATPases have 2 components, F(1) - the catalytic core - and F(0) - the membrane proton channel. F(1) has five subunits: alpha(3), beta(3), gamma(1), delta(1), epsilon(1). F(0) has three main subunits: a(1), b(2) and c(10-14). The alpha and beta chains form an alternating ring which encloses part of the gamma chain. F(1) is attached to F(0) by a central stalk formed by the gamma and epsilon chains, while a peripheral stalk is formed by the delta and b chains.

Its subcellular location is the cell inner membrane. Functionally, f(1)F(0) ATP synthase produces ATP from ADP in the presence of a proton or sodium gradient. F-type ATPases consist of two structural domains, F(1) containing the extramembraneous catalytic core and F(0) containing the membrane proton channel, linked together by a central stalk and a peripheral stalk. During catalysis, ATP synthesis in the catalytic domain of F(1) is coupled via a rotary mechanism of the central stalk subunits to proton translocation. In terms of biological role, key component of the F(0) channel; it plays a direct role in translocation across the membrane. A homomeric c-ring of between 10-14 subunits forms the central stalk rotor element with the F(1) delta and epsilon subunits. The sequence is that of ATP synthase subunit c from Hyphomonas neptunium (strain ATCC 15444).